The chain runs to 387 residues: 1-deoxy-D-xylulose 5-phosphate reductoisomerase (387 aa).

Residues T10, G11, I13, N38, and N122 each contribute to the NADPH site. Residue K123 coordinates 1-deoxy-D-xylulose 5-phosphate. An NADPH-binding site is contributed by E124. Residue D148 participates in Mn(2+) binding. 4 residues coordinate 1-deoxy-D-xylulose 5-phosphate: S149, E150, S174, and H197. Residue E150 coordinates Mn(2+). G203 is an NADPH binding site. The 1-deoxy-D-xylulose 5-phosphate site is built by S210, N215, K216, and E219. E219 provides a ligand contact to Mn(2+).

The protein belongs to the DXR family. Mg(2+) serves as cofactor. Mn(2+) is required as a cofactor.

It carries out the reaction 2-C-methyl-D-erythritol 4-phosphate + NADP(+) = 1-deoxy-D-xylulose 5-phosphate + NADPH + H(+). It participates in isoprenoid biosynthesis; isopentenyl diphosphate biosynthesis via DXP pathway; isopentenyl diphosphate from 1-deoxy-D-xylulose 5-phosphate: step 1/6. In terms of biological role, catalyzes the NADPH-dependent rearrangement and reduction of 1-deoxy-D-xylulose-5-phosphate (DXP) to 2-C-methyl-D-erythritol 4-phosphate (MEP). The polypeptide is 1-deoxy-D-xylulose 5-phosphate reductoisomerase (Ehrlichia canis (strain Jake)).